The chain runs to 313 residues: Epoxide hydrolase 1 (313 aa).

The AB hydrolase-1 domain maps to 25–299; sequence PAVLFLHGFP…AAHFINQEKA (275 aa). Asp100 serves as the catalytic Nucleophile. Tyr149 contributes to the an epoxide binding site. The active-site Proton donor is Tyr227. His292 functions as the Proton acceptor in the catalytic mechanism.

This sequence belongs to the AB hydrolase superfamily. Epoxide hydrolase family. In terms of assembly, homodimer. As to expression, highly expressed in fruits 15 days after anthesis (15-DAA).

It carries out the reaction an epoxide + H2O = an ethanediol. The enzyme catalyses (24S)-24,25-epoxycucurbitadienol + H2O = (24R)-24,25-dihydroxycucurbitadienol. It functions in the pathway secondary metabolite biosynthesis; terpenoid biosynthesis. Its function is as follows. Epoxide hydrolase involved in the biosynthesis of cucurbitacin and mogroside tetracyclic triterpene natural products (e.g. siamenoside I and mogrosides IV, V and VI). Cucurbitacins have cytotoxic properties and exhibit deterrent taste as a defense barrier against herbivores. Mogrosides are nonsugar highly oxygenated compounds used as high-intensity zero-calorie sweeteners; they also possess pharmacological properties such as regulating immunity, lowering blood sugar and lipid levels, protecting the liver, and acting as antioxidants and antitumor agents. Catalyzes the hydrolysis of aromatic epoxide-containing substrates, such as the conversion of 24,25-epoxycucurbitadienol to 24,25-dihydroxycucurbitadienol. This chain is Epoxide hydrolase 1, found in Siraitia grosvenorii (Monk's fruit).